The chain runs to 586 residues: Protein CBFA2T2 (586 aa).

The interval 1–95 (MVGIPGPYQF…SSSSSLANQQ (95 aa)) is disordered. Positions 56-68 (SSHSNGINHSPPT) are enriched in polar residues. A compositionally biased stretch (low complexity) spans 77–90 (QRSSNGPSSSSSSS). A TAFH domain is found at 102-197 (VRQLSKLKRF…TPSQYLAQHE (96 aa)). Disordered regions lie at residues 204–242 (STSSPADSSELLMEMNGNGKRHSPDRREEERETAPAEPP) and 387–417 (IRKGSEHPSRQHSPSSTDSGASDSVRDFGSR). The segment covering 228–237 (DRREEERETA) has biased composition (basic and acidic residues). A compositionally biased stretch (low complexity) spans 399–409 (SPSSTDSGASD). Positions 429–481 (RKAEEAVNEVKRQAMSEVQKAVSEAEQKAFEMIASERARMEQTIVDAKRRAAE) form a coiled coil. C497, C500, C508, C511, C517, C521, H529, and C533 together coordinate Zn(2+). The MYND-type zinc-finger motif lies at 497–533 (CWNCGRKASETCSGCNIARYCGSFCQHKDWEKHHRIC). The interval 561–586 (SPTLERSSSATSRSSTPASVTAVDGL) is disordered. Residues 566–586 (RSSSATSRSSTPASVTAVDGL) are compositionally biased toward low complexity.

It localises to the nucleus. Functionally, may act as a transcriptional corepressor. The sequence is that of Protein CBFA2T2 (cbfa2t2) from Xenopus laevis (African clawed frog).